The sequence spans 259 residues: Thiazole synthase (259 aa).

Lys95 functions as the Schiff-base intermediate with DXP in the catalytic mechanism. 1-deoxy-D-xylulose 5-phosphate-binding positions include Gly156, 182–183, and 204–205; these read AG and NT.

It belongs to the ThiG family. As to quaternary structure, homotetramer. Forms heterodimers with either ThiH or ThiS.

Its subcellular location is the cytoplasm. The enzyme catalyses [ThiS sulfur-carrier protein]-C-terminal-Gly-aminoethanethioate + 2-iminoacetate + 1-deoxy-D-xylulose 5-phosphate = [ThiS sulfur-carrier protein]-C-terminal Gly-Gly + 2-[(2R,5Z)-2-carboxy-4-methylthiazol-5(2H)-ylidene]ethyl phosphate + 2 H2O + H(+). Its pathway is cofactor biosynthesis; thiamine diphosphate biosynthesis. Catalyzes the rearrangement of 1-deoxy-D-xylulose 5-phosphate (DXP) to produce the thiazole phosphate moiety of thiamine. Sulfur is provided by the thiocarboxylate moiety of the carrier protein ThiS. In vitro, sulfur can be provided by H(2)S. The sequence is that of Thiazole synthase from Serratia proteamaculans (strain 568).